The sequence spans 1905 residues: Alpha-2-macroglobulin (1905 aa).

An N-terminal signal peptide occupies residues 1–21; sequence MNKQYFLSLFSTLAVALTLSG. Cysteine 22 is lipidated: N-palmitoyl cysteine. Cysteine 22 is lipidated: S-diacylglycerol cysteine. Positions 1438–1441 form a cross-link, isoglutamyl cysteine thioester (Cys-Gln); the sequence is CTEQ.

Belongs to the protease inhibitor I39 (alpha-2-macroglobulin) family. Bacterial alpha-2-macroglobulin subfamily.

It localises to the cell membrane. Its function is as follows. Protects the bacterial cell from host peptidases. The polypeptide is Alpha-2-macroglobulin (Pasteurella multocida (strain Pm70)).